The sequence spans 247 residues: Ribosomal RNA small subunit methyltransferase G (247 aa).

Residues Gly-84, Phe-89, 136 to 137, and Arg-155 contribute to the S-adenosyl-L-methionine site; that span reads AE.

Belongs to the methyltransferase superfamily. RNA methyltransferase RsmG family.

It localises to the cytoplasm. Functionally, specifically methylates the N7 position of a guanine in 16S rRNA. This chain is Ribosomal RNA small subunit methyltransferase G, found in Prochlorococcus marinus (strain MIT 9303).